Reading from the N-terminus, the 400-residue chain is Methylthioribose kinase (400 aa).

ATP is bound by residues Asn-44, Lys-61, and 115–117 (EDL). Asp-233 is a substrate binding site. 250-252 (DPE) is an ATP binding site. Arg-340 is a binding site for substrate.

It belongs to the methylthioribose kinase family. As to quaternary structure, homodimer.

It catalyses the reaction 5-(methylsulfanyl)-D-ribose + ATP = 5-(methylsulfanyl)-alpha-D-ribose 1-phosphate + ADP + H(+). It participates in amino-acid biosynthesis; L-methionine biosynthesis via salvage pathway; S-methyl-5-thio-alpha-D-ribose 1-phosphate from S-methyl-5'-thioadenosine (hydrolase route): step 2/2. Its function is as follows. Catalyzes the phosphorylation of methylthioribose into methylthioribose-1-phosphate. The sequence is that of Methylthioribose kinase from Geobacillus sp. (strain WCH70).